Here is a 938-residue protein sequence, read N- to C-terminus: Protein translocase subunit SecA (938 aa).

Residues glutamine 90, 108–112 (GEGKT), and aspartate 504 contribute to the ATP site.

Belongs to the SecA family. Monomer and homodimer. Part of the essential Sec protein translocation apparatus which comprises SecA, SecYEG and auxiliary proteins SecDF. Other proteins may also be involved.

The protein localises to the cell inner membrane. It is found in the cellular thylakoid membrane. Its subcellular location is the cytoplasm. The enzyme catalyses ATP + H2O + cellular proteinSide 1 = ADP + phosphate + cellular proteinSide 2.. Part of the Sec protein translocase complex. Interacts with the SecYEG preprotein conducting channel. Has a central role in coupling the hydrolysis of ATP to the transfer of proteins into and across the cell membrane, serving as an ATP-driven molecular motor driving the stepwise translocation of polypeptide chains across the membrane. Its function is as follows. Probably participates in protein translocation into and across both the cytoplasmic and thylakoid membranes in cyanobacterial cells. This Picosynechococcus sp. (strain ATCC 27264 / PCC 7002 / PR-6) (Agmenellum quadruplicatum) protein is Protein translocase subunit SecA.